The primary structure comprises 133 residues: Ribosome-binding factor A (133 aa).

The protein belongs to the RbfA family. Monomer. Binds 30S ribosomal subunits, but not 50S ribosomal subunits or 70S ribosomes.

The protein localises to the cytoplasm. Its function is as follows. One of several proteins that assist in the late maturation steps of the functional core of the 30S ribosomal subunit. Associates with free 30S ribosomal subunits (but not with 30S subunits that are part of 70S ribosomes or polysomes). Required for efficient processing of 16S rRNA. May interact with the 5'-terminal helix region of 16S rRNA. The protein is Ribosome-binding factor A of Enterobacter sp. (strain 638).